The sequence spans 186 residues: Shikimate kinase (186 aa).

21–26 lines the ATP pocket; it reads GVGKTT. Thr-25 contacts Mg(2+). 3 residues coordinate substrate: Asp-43, Arg-67, and Gly-90. Arg-129 is an ATP binding site. Arg-147 contributes to the substrate binding site.

This sequence belongs to the shikimate kinase family. As to quaternary structure, monomer. It depends on Mg(2+) as a cofactor.

Its subcellular location is the cytoplasm. It catalyses the reaction shikimate + ATP = 3-phosphoshikimate + ADP + H(+). The protein operates within metabolic intermediate biosynthesis; chorismate biosynthesis; chorismate from D-erythrose 4-phosphate and phosphoenolpyruvate: step 5/7. Functionally, catalyzes the specific phosphorylation of the 3-hydroxyl group of shikimic acid using ATP as a cosubstrate. This Bacillus subtilis (strain 168) protein is Shikimate kinase.